The primary structure comprises 144 residues: Flagellar assembly factor FliW (144 aa).

The protein belongs to the FliW family. As to quaternary structure, monomer. One copy interacts with the each alpha-helical wing of the CsrA homodimer, yielding a FliW-CsrA(2)-FliW complex. Comparison with a CsrA-mRNA structure (2JPP) suggests CsrA cannot bind both mRNA and FliW at the same time. Interacts with flagellin.

The protein resides in the cytoplasm. In terms of biological role, acts as an anti-CsrA protein, binds CsrA and prevents it from repressing translation of its target genes, one of which is flagellin. Binds to flagellin and participates in the assembly of the flagellum. Functionally, allosterically inhibits CsrA binding to mRNA in a non-competitive fashion by preventing CsrA binding to the 5'-UTR. This is Flagellar assembly factor FliW from Geobacillus thermodenitrificans (strain NG80-2).